The sequence spans 184 residues: Adenine phosphoribosyltransferase (184 aa).

It belongs to the purine/pyrimidine phosphoribosyltransferase family. In terms of assembly, homodimer.

Its subcellular location is the cytoplasm. The enzyme catalyses AMP + diphosphate = 5-phospho-alpha-D-ribose 1-diphosphate + adenine. Its pathway is purine metabolism; AMP biosynthesis via salvage pathway; AMP from adenine: step 1/1. Functionally, catalyzes a salvage reaction resulting in the formation of AMP, that is energically less costly than de novo synthesis. The sequence is that of Adenine phosphoribosyltransferase from Blochmanniella pennsylvanica (strain BPEN).